We begin with the raw amino-acid sequence, 287 residues long: ATP phosphoribosyltransferase (287 aa).

Belongs to the ATP phosphoribosyltransferase family. Long subfamily. As to quaternary structure, equilibrium between an active dimeric form, an inactive hexameric form and higher aggregates. Interconversion between the various forms is largely reversible and is influenced by the natural substrates and inhibitors of the enzyme. Requires Mg(2+) as cofactor.

It is found in the cytoplasm. It catalyses the reaction 1-(5-phospho-beta-D-ribosyl)-ATP + diphosphate = 5-phospho-alpha-D-ribose 1-diphosphate + ATP. It functions in the pathway amino-acid biosynthesis; L-histidine biosynthesis; L-histidine from 5-phospho-alpha-D-ribose 1-diphosphate: step 1/9. Its activity is regulated as follows. Feedback inhibited by histidine. In terms of biological role, catalyzes the condensation of ATP and 5-phosphoribose 1-diphosphate to form N'-(5'-phosphoribosyl)-ATP (PR-ATP). Has a crucial role in the pathway because the rate of histidine biosynthesis seems to be controlled primarily by regulation of HisG enzymatic activity. The chain is ATP phosphoribosyltransferase (hisG) from Mycobacterium leprae (strain TN).